A 401-amino-acid polypeptide reads, in one-letter code: Aspartokinase (401 aa).

Belongs to the aspartokinase family.

The catalysed reaction is L-aspartate + ATP = 4-phospho-L-aspartate + ADP. It functions in the pathway amino-acid biosynthesis; L-lysine biosynthesis via DAP pathway; (S)-tetrahydrodipicolinate from L-aspartate: step 1/4. It participates in amino-acid biosynthesis; L-methionine biosynthesis via de novo pathway; L-homoserine from L-aspartate: step 1/3. The protein operates within amino-acid biosynthesis; L-threonine biosynthesis; L-threonine from L-aspartate: step 1/5. The protein is Aspartokinase (lysC) of Rickettsia conorii (strain ATCC VR-613 / Malish 7).